We begin with the raw amino-acid sequence, 449 residues long: Elongation factor 1-alpha 1 (449 aa).

Positions 5-230 constitute a tr-type G domain; the sequence is KFHINIVVIG…DQINEPKRPS (226 aa). The G1 stretch occupies residues 14 to 21; the sequence is GHVDSGKS. A GTP-binding site is contributed by 14–21; the sequence is GHVDSGKS. Lys55 is subject to N6,N6-dimethyllysine. Residues 70-74 form a G2 region; it reads GITID. Residue Lys79 is modified to N6,N6,N6-trimethyllysine. The tract at residues 91 to 94 is G3; that stretch reads DAPG. GTP is bound by residues 91-95 and 153-156; these read DAPGH and NKMD. The interval 153–156 is G4; the sequence is NKMD. Lys187 is subject to N6,N6,N6-trimethyllysine. Positions 194–196 are G5; that stretch reads SGF. Lys261 is modified (N6-methyllysine). N6,N6,N6-trimethyllysine occurs at positions 306 and 396. Glycyl lysine isopeptide (Lys-Gly) (interchain with G-Cter in ubiquitin) cross-links involve residues Lys438 and Lys441.

The protein belongs to the TRAFAC class translation factor GTPase superfamily. Classic translation factor GTPase family. EF-Tu/EF-1A subfamily.

The protein localises to the cytoplasm. Functionally, this protein promotes the GTP-dependent binding of aminoacyl-tRNA to the A-site of ribosomes during protein biosynthesis. This chain is Elongation factor 1-alpha 1 (A1), found in Arabidopsis thaliana (Mouse-ear cress).